The chain runs to 458 residues: Tetratricopeptide repeat protein 23-like (458 aa).

2 coiled-coil regions span residues 175–198 (GKQAYIHLQKAERNMKELKELNNG) and 246–278 (TSELISLYEEIAQIEQLRKNHKQAIQYLQQAYS).

It localises to the cytoplasm. The protein localises to the cytoskeleton. Its subcellular location is the microtubule organizing center. The protein resides in the centrosome. It is found in the spindle. It localises to the midbody. In Mus musculus (Mouse), this protein is Tetratricopeptide repeat protein 23-like (Ttc23l).